The chain runs to 253 residues: Transcription factor ORG2 (253 aa).

The bHLH domain occupies V71–L123.

As to quaternary structure, homodimer. As to expression, roots.

Its subcellular location is the nucleus. The sequence is that of Transcription factor ORG2 (ORG2) from Arabidopsis thaliana (Mouse-ear cress).